Reading from the N-terminus, the 387-residue chain is Alpha-maltose-1-phosphate synthase (387 aa).

The protein belongs to the glycosyltransferase group 1 family.

The enzyme catalyses ADP-alpha-D-glucose + alpha-D-glucose 1-phosphate = alpha-maltose 1-phosphate + ADP + H(+). It functions in the pathway glycan biosynthesis; glycogen biosynthesis. In terms of biological role, involved in the biosynthesis of the maltose-1-phosphate (M1P) building block required for alpha-glucan production by the key enzyme GlgE. Catalyzes the formation of an alpha-1,4 linkage between glucose from ADP-glucose and glucose 1-phosphate (G1P) to yield maltose-1-phosphate (M1P). The sequence is that of Alpha-maltose-1-phosphate synthase from Mycolicibacterium smegmatis (strain ATCC 700084 / mc(2)155) (Mycobacterium smegmatis).